The chain runs to 1273 residues: DNA-directed RNA polymerase subunit beta (1273 aa).

The segment at 1252 to 1273 is disordered; the sequence is ADDQDLVVSSNDEEVSENDERS.

This sequence belongs to the RNA polymerase beta chain family. In terms of assembly, the RNAP catalytic core consists of 2 alpha, 1 beta, 1 beta' and 1 omega subunit. When a sigma factor is associated with the core the holoenzyme is formed, which can initiate transcription.

The catalysed reaction is RNA(n) + a ribonucleoside 5'-triphosphate = RNA(n+1) + diphosphate. Its function is as follows. DNA-dependent RNA polymerase catalyzes the transcription of DNA into RNA using the four ribonucleoside triphosphates as substrates. The protein is DNA-directed RNA polymerase subunit beta of Dehalococcoides mccartyi (strain CBDB1).